Here is a 225-residue protein sequence, read N- to C-terminus: MVSHSELRKLFCSADAVCFDVDSTVIREEGIDELAKFCGVEAAVSEMTRRAMGGALPFKDALTQRLALIQPSRDQVQRLLAEHPPHLTPGIRELVSRLQERNVQVFLISGGFRSIVEHVAAKLNIPTTNVFANRLKFYFNGEYAGFDEMQPTAESGGKGKVIRFLKEKFHFKKIIMIGDGATDMEACPPADAFIGFGGNVIRQQVKDNAKWYITDFVELLGELEE.

Methionine 1 carries the N-acetylmethionine modification. Aspartate 20 acts as the Nucleophile in catalysis. 2 residues coordinate Mg(2+): aspartate 20 and aspartate 22. Residue 20 to 22 (DVD) participates in L-serine binding. Catalysis depends on aspartate 22, which acts as the Proton donor. Methionine 52 contacts O-phospho-L-serine. Position 53 (glycine 53) interacts with phosphate. L-serine-binding positions include 109–111 (SGG) and lysine 158. O-phospho-L-serine-binding positions include 109–111 (SGG) and lysine 158. Mg(2+) is bound at residue aspartate 179. Position 182 (threonine 182) interacts with O-phospho-L-serine. Threonine 182 contributes to the phosphate binding site.

This sequence belongs to the HAD-like hydrolase superfamily. SerB family. In terms of assembly, homodimer. Mg(2+) serves as cofactor.

It localises to the cytoplasm. It is found in the cytosol. The catalysed reaction is O-phospho-L-serine + H2O = L-serine + phosphate. The enzyme catalyses O-phospho-D-serine + H2O = D-serine + phosphate. It functions in the pathway amino-acid biosynthesis; L-serine biosynthesis; L-serine from 3-phospho-D-glycerate: step 3/3. Catalyzes the last irreversible step in the biosynthesis of L-serine from carbohydrates, the dephosphorylation of O-phospho-L-serine to L-serine. L-serine can then be used in protein synthesis, to produce other amino acids, in nucleotide metabolism or in glutathione synthesis, or can be racemized to D-serine, a neuromodulator. May also act on O-phospho-D-serine. The polypeptide is Phosphoserine phosphatase (Mus musculus (Mouse)).